The primary structure comprises 129 residues: Ribosome-binding factor A (129 aa).

Belongs to the RbfA family. As to quaternary structure, monomer. Binds 30S ribosomal subunits, but not 50S ribosomal subunits or 70S ribosomes.

Its subcellular location is the cytoplasm. Its function is as follows. One of several proteins that assist in the late maturation steps of the functional core of the 30S ribosomal subunit. Associates with free 30S ribosomal subunits (but not with 30S subunits that are part of 70S ribosomes or polysomes). Required for efficient processing of 16S rRNA. May interact with the 5'-terminal helix region of 16S rRNA. The sequence is that of Ribosome-binding factor A from Stutzerimonas stutzeri (strain A1501) (Pseudomonas stutzeri).